Here is a 549-residue protein sequence, read N- to C-terminus: Dihydroxy-acid dehydratase (549 aa).

Aspartate 78 lines the Mg(2+) pocket. Cysteine 119 is a [2Fe-2S] cluster binding site. Aspartate 120 and lysine 121 together coordinate Mg(2+). Lysine 121 carries the N6-carboxylysine modification. Residue cysteine 191 participates in [2Fe-2S] cluster binding. Residue glutamate 441 participates in Mg(2+) binding. The active-site Proton acceptor is the serine 466.

It belongs to the IlvD/Edd family. Homodimer. The cofactor is [2Fe-2S] cluster. Mg(2+) is required as a cofactor.

It catalyses the reaction (2R)-2,3-dihydroxy-3-methylbutanoate = 3-methyl-2-oxobutanoate + H2O. It carries out the reaction (2R,3R)-2,3-dihydroxy-3-methylpentanoate = (S)-3-methyl-2-oxopentanoate + H2O. It participates in amino-acid biosynthesis; L-isoleucine biosynthesis; L-isoleucine from 2-oxobutanoate: step 3/4. Its pathway is amino-acid biosynthesis; L-valine biosynthesis; L-valine from pyruvate: step 3/4. Its function is as follows. Functions in the biosynthesis of branched-chain amino acids. Catalyzes the dehydration of (2R,3R)-2,3-dihydroxy-3-methylpentanoate (2,3-dihydroxy-3-methylvalerate) into 2-oxo-3-methylpentanoate (2-oxo-3-methylvalerate) and of (2R)-2,3-dihydroxy-3-methylbutanoate (2,3-dihydroxyisovalerate) into 2-oxo-3-methylbutanoate (2-oxoisovalerate), the penultimate precursor to L-isoleucine and L-valine, respectively. The polypeptide is Dihydroxy-acid dehydratase (Methanosphaera stadtmanae (strain ATCC 43021 / DSM 3091 / JCM 11832 / MCB-3)).